Reading from the N-terminus, the 204-residue chain is Lipoprotein signal peptidase (204 aa).

Residues 1 to 42 (MAEAERIIGTPDIPDAAGEGQERPDADPEREQQEQEQAPERT) form a disordered region. Basic and acidic residues predominate over residues 20 to 42 (GQERPDADPEREQQEQEQAPERT). The next 3 membrane-spanning stretches (helical) occupy residues 50-70 (VLFAVALFAYLLDLGSKMLVV), 100-120 (FGEAFTIIFTVIAAAVIVVIA), and 126-146 (LHSLPWAIALGLLLGGALGNL). Catalysis depends on residues aspartate 163 and aspartate 177. Residues 170–190 (FAVFNLADSAIVCGGILIVIL) form a helical membrane-spanning segment.

It belongs to the peptidase A8 family.

It is found in the cell membrane. The catalysed reaction is Release of signal peptides from bacterial membrane prolipoproteins. Hydrolyzes -Xaa-Yaa-Zaa-|-(S,diacylglyceryl)Cys-, in which Xaa is hydrophobic (preferably Leu), and Yaa (Ala or Ser) and Zaa (Gly or Ala) have small, neutral side chains.. The protein operates within protein modification; lipoprotein biosynthesis (signal peptide cleavage). In terms of biological role, this protein specifically catalyzes the removal of signal peptides from prolipoproteins. The protein is Lipoprotein signal peptidase of Streptomyces coelicolor (strain ATCC BAA-471 / A3(2) / M145).